We begin with the raw amino-acid sequence, 735 residues long: Phosphoribosylformylglycinamidine synthase subunit PurL (735 aa).

His48 is an active-site residue. ATP contacts are provided by Tyr51 and Lys90. Residue Glu92 participates in Mg(2+) binding. Residues 93-96 (SHNH) and Arg115 contribute to the substrate site. The active-site Proton acceptor is His94. Asp116 is a binding site for Mg(2+). Gln239 contributes to the substrate binding site. Position 267 (Asp267) interacts with Mg(2+). Position 311 to 313 (311 to 313 (ESQ)) interacts with substrate. ATP-binding residues include Asp492 and Gly529. Residue Asn530 coordinates Mg(2+). Ser532 is a binding site for substrate.

It belongs to the FGAMS family. Monomer. Part of the FGAM synthase complex composed of 1 PurL, 1 PurQ and 2 PurS subunits.

The protein localises to the cytoplasm. The enzyme catalyses N(2)-formyl-N(1)-(5-phospho-beta-D-ribosyl)glycinamide + L-glutamine + ATP + H2O = 2-formamido-N(1)-(5-O-phospho-beta-D-ribosyl)acetamidine + L-glutamate + ADP + phosphate + H(+). It participates in purine metabolism; IMP biosynthesis via de novo pathway; 5-amino-1-(5-phospho-D-ribosyl)imidazole from N(2)-formyl-N(1)-(5-phospho-D-ribosyl)glycinamide: step 1/2. In terms of biological role, part of the phosphoribosylformylglycinamidine synthase complex involved in the purines biosynthetic pathway. Catalyzes the ATP-dependent conversion of formylglycinamide ribonucleotide (FGAR) and glutamine to yield formylglycinamidine ribonucleotide (FGAM) and glutamate. The FGAM synthase complex is composed of three subunits. PurQ produces an ammonia molecule by converting glutamine to glutamate. PurL transfers the ammonia molecule to FGAR to form FGAM in an ATP-dependent manner. PurS interacts with PurQ and PurL and is thought to assist in the transfer of the ammonia molecule from PurQ to PurL. This is Phosphoribosylformylglycinamidine synthase subunit PurL from Bradyrhizobium sp. (strain BTAi1 / ATCC BAA-1182).